The chain runs to 352 residues: Heat-inducible transcription repressor HrcA (352 aa).

This sequence belongs to the HrcA family.

In terms of biological role, negative regulator of class I heat shock genes (grpE-dnaK-dnaJ and groELS operons). Prevents heat-shock induction of these operons. The sequence is that of Heat-inducible transcription repressor HrcA from Thermosynechococcus vestitus (strain NIES-2133 / IAM M-273 / BP-1).